We begin with the raw amino-acid sequence, 448 residues long: Clusterin (448 aa).

The signal sequence occupies residues 1–21 (MKILLLCVALLLIWDNGMVLG). The short motif at 77-80 (KKKK) is the Nuclear localization signal element. 5 disulfides stabilise this stretch: C101-C312, C112-C304, C115-C301, C120-C294, and C128-C284. N102 carries an N-linked (GlcNAc...) asparagine glycan. Residue S132 is modified to Phosphoserine. N-linked (GlcNAc...) asparagine glycans are attached at residues N144, N290, N327, N353, and N373. S395 is subject to Phosphoserine. The short motif at 442 to 446 (RRKSR) is the Nuclear localization signal element.

It belongs to the clusterin family. As to quaternary structure, antiparallel disulfide-linked heterodimer of an alpha chain and a beta chain. Self-associates and forms higher oligomers. Interacts with a broad range of misfolded proteins, including APP, APOC2 and LYZ. Slightly acidic pH promotes interaction with misfolded proteins. Forms high-molecular weight oligomers upon interaction with misfolded proteins. Interacts with APOA1, LRP2, CLUAP1 and PON1. Interacts with the complement membrane attack complex. Interacts (via alpha chain) with XRCC6. Interacts with SYVN1, COMMD1, BTRC, CUL1 and with ubiquitin and SCF (SKP1-CUL1-F-box protein) E3 ubiquitin-protein ligase complexes. Interacts (via alpha chain) with BAX in stressed cells, where BAX undergoes a conformation change leading to association with the mitochondrial membrane. Does not interact with BAX in unstressed cells. Found in a complex with LTF, CLU, EPPIN and SEMG1. Interacts (immaturely glycosylated pre-secreted form) with HSPA5; this interaction promotes CLU stability and facilitates stress-induced CLU retrotranslocation from the secretory pathway to the mitochondria, thereby reducing stress-induced apoptosis by stabilizing mitochondrial membrane integrity. Interacts with BCL2L1; this interaction releases and activates BAX and promotes cell death. Interacts with TGFBR2 and ACVR1. Interacts (secreted form) with STMN3; this interaction may act as an important modulator during neuronal differentiation. Interacts with VLDLR and LRP8. Proteolytically cleaved on its way through the secretory system, probably within the Golgi lumen. Proteolytic cleavage is not necessary for its chaperone activity. All non-secreted forms are not proteolytically cleaved. Chaperone activity of uncleaved forms is dependent on a non-reducing environment. Post-translationally, polyubiquitinated, leading to proteasomal degradation. Under cellular stress, the intracellular level of cleaved form is reduced due to proteasomal degradation. In terms of processing, extensively glycosylated with sulfated N-linked carbohydrates. About 30% of the protein mass is comprised of complex N-linked carbohydrate. Endoplasmic reticulum (ER) stress induces changes in glycosylation status and increases level of hypoglycosylated forms. Core carbohydrates are essential for chaperone activity. Non-secreted forms are hypoglycosylated or unglycosylated. As to expression, most abundant in stomach, liver, brain, and testis, with intermediate levels in heart, ovary and kidney.

It localises to the secreted. Its subcellular location is the nucleus. The protein localises to the cytoplasm. The protein resides in the mitochondrion membrane. It is found in the cytosol. It localises to the microsome. Its subcellular location is the endoplasmic reticulum. The protein localises to the mitochondrion. The protein resides in the perinuclear region. It is found in the cytoplasmic vesicle. It localises to the secretory vesicle. Its subcellular location is the chromaffin granule. In terms of biological role, functions as extracellular chaperone that prevents aggregation of non native proteins. Prevents stress-induced aggregation of blood plasma proteins. Inhibits formation of amyloid fibrils by APP, APOC2, B2M, CALCA, CSN3, SNCA and aggregation-prone LYZ variants (in vitro). Does not require ATP. Maintains partially unfolded proteins in a state appropriate for subsequent refolding by other chaperones, such as HSPA8/HSC70. Does not refold proteins by itself. Binding to cell surface receptors triggers internalization of the chaperone-client complex and subsequent lysosomal or proteasomal degradation. When secreted, protects cells against apoptosis and against cytolysis by complement: inhibits assembly of the complement membrane attack complex (MAC) by preventing polymerization of C9 pore component of the MAC complex. Intracellular forms interact with ubiquitin and SCF (SKP1-CUL1-F-box protein) E3 ubiquitin-protein ligase complexes and promote the ubiquitination and subsequent proteasomal degradation of target proteins. Promotes proteasomal degradation of COMMD1 and IKBKB. Modulates NF-kappa-B transcriptional activity. Following stress, promotes apoptosis. Inhibits apoptosis when associated with the mitochondrial membrane by interference with BAX-dependent release of cytochrome c into the cytoplasm. Plays a role in the regulation of cell proliferation. Following ER stress, suppresses stress-induced apoptosis by stabilizing mitochondrial membrane integrity through interaction with HSPA5. When secreted, does not affect caspase or BAX-mediated intrinsic apoptosis and TNF-induced NF-kappa-B-activity. When secreted, acts as an important modulator during neuronal differentiation through interaction with STMN3. Plays a role in the clearance of immune complexes that arise during cell injury. This is Clusterin from Mus musculus (Mouse).